The sequence spans 223 residues: Type III pantothenate kinase (223 aa).

17 to 24 serves as a coordination point for ATP; it reads DIGNTHIH. Residues Y81 and 85-88 each bind substrate; that span reads GIDR. The Proton acceptor role is filled by D87. D102 is a K(+) binding site. S105 contributes to the ATP binding site. T157 contacts substrate.

It belongs to the type III pantothenate kinase family. In terms of assembly, homodimer. It depends on NH4(+) as a cofactor. The cofactor is K(+).

The protein resides in the cytoplasm. It carries out the reaction (R)-pantothenate + ATP = (R)-4'-phosphopantothenate + ADP + H(+). The protein operates within cofactor biosynthesis; coenzyme A biosynthesis; CoA from (R)-pantothenate: step 1/5. Catalyzes the phosphorylation of pantothenate (Pan), the first step in CoA biosynthesis. The polypeptide is Type III pantothenate kinase (Helicobacter pylori (strain HPAG1)).